A 57-amino-acid polypeptide reads, in one-letter code: Protein CgkB (57 aa).

This Pseudoalteromonas carrageenovora (Alteromonas carrageenovora) protein is Protein CgkB (cgkB).